We begin with the raw amino-acid sequence, 237 residues long: Demethylmenaquinone methyltransferase (237 aa).

S-adenosyl-L-methionine is bound by residues threonine 58, aspartate 79, and asparagine 106–alanine 107.

This sequence belongs to the class I-like SAM-binding methyltransferase superfamily. MenG/UbiE family.

It catalyses the reaction a 2-demethylmenaquinol + S-adenosyl-L-methionine = a menaquinol + S-adenosyl-L-homocysteine + H(+). It functions in the pathway quinol/quinone metabolism; menaquinone biosynthesis; menaquinol from 1,4-dihydroxy-2-naphthoate: step 2/2. Methyltransferase required for the conversion of demethylmenaquinol (DMKH2) to menaquinol (MKH2). The chain is Demethylmenaquinone methyltransferase from Bacillus anthracis (strain A0248).